A 182-amino-acid polypeptide reads, in one-letter code: ATP synthase subunit delta (182 aa).

It belongs to the ATPase delta chain family. F-type ATPases have 2 components, F(1) - the catalytic core - and F(0) - the membrane proton channel. F(1) has five subunits: alpha(3), beta(3), gamma(1), delta(1), epsilon(1). F(0) has three main subunits: a(1), b(2) and c(10-14). The alpha and beta chains form an alternating ring which encloses part of the gamma chain. F(1) is attached to F(0) by a central stalk formed by the gamma and epsilon chains, while a peripheral stalk is formed by the delta and b chains.

It is found in the cell inner membrane. Functionally, f(1)F(0) ATP synthase produces ATP from ADP in the presence of a proton or sodium gradient. F-type ATPases consist of two structural domains, F(1) containing the extramembraneous catalytic core and F(0) containing the membrane proton channel, linked together by a central stalk and a peripheral stalk. During catalysis, ATP synthesis in the catalytic domain of F(1) is coupled via a rotary mechanism of the central stalk subunits to proton translocation. In terms of biological role, this protein is part of the stalk that links CF(0) to CF(1). It either transmits conformational changes from CF(0) to CF(1) or is implicated in proton conduction. In Persephonella marina (strain DSM 14350 / EX-H1), this protein is ATP synthase subunit delta.